Here is a 203-residue protein sequence, read N- to C-terminus: Pectinesterase inhibitor 12 (203 aa).

An N-terminal signal peptide occupies residues 1-26 (MRMSKALAAVVAISVSLSAAAMGVDA). 2 disulfides stabilise this stretch: cysteine 32–cysteine 47 and cysteine 100–cysteine 140.

This sequence belongs to the PMEI family.

The protein resides in the secreted. It localises to the extracellular space. It is found in the apoplast. Its function is as follows. Pectin methylesterase (PME) inhibitor that inhibits PME in vitro. This is Pectinesterase inhibitor 12 from Oryza sativa subsp. japonica (Rice).